A 382-amino-acid polypeptide reads, in one-letter code: Sialidase (382 aa).

Position 37 (arginine 37) interacts with substrate. The active-site Proton acceptor is aspartate 62. BNR repeat units lie at residues 71-82 (ARSTDFGKTWSY), 140-151 (IYSDDNGLTWSN), and 208-219 (IYSKDNGETWTM). Residue arginine 245 participates in substrate binding. The stretch at 255 to 266 (YISHDLGTTWEI) is one BNR 4 repeat. Tyrosine 347 (nucleophile) is an active-site residue.

This sequence belongs to the glycosyl hydrolase 33 family.

The protein resides in the secreted. The enzyme catalyses Hydrolysis of alpha-(2-&gt;3)-, alpha-(2-&gt;6)-, alpha-(2-&gt;8)- glycosidic linkages of terminal sialic acid residues in oligosaccharides, glycoproteins, glycolipids, colominic acid and synthetic substrates.. Its function is as follows. Sialidases have been suggested to be pathogenic factors in microbial infections. In Clostridium perfringens, this protein is Sialidase (nanH).